The following is a 203-amino-acid chain: Akirin-2 (203 aa).

Residues Ser-18 and Ser-21 each carry the phosphoserine modification. The short motif at 22–27 is the Nuclear localization signal element; that stretch reads PKRRRC. Ser-57 bears the Phosphoserine mark. Residues 115–137 are disordered; sequence PHAFLLSGPASPGTPSGTSSPLK. Low complexity predominate over residues 119 to 135; that stretch reads LLSGPASPGTPSGTSSP. Residues 200 to 203 carry the SYVS motif motif; sequence SYVS.

The protein belongs to the akirin family. As to quaternary structure, homodimer. Interacts with IPO9; the interaction is direct. Associates with 20S and 26S proteasomes. Interacts with SMARCD1; promoting SWI/SNF complex recruitment. Interacts with NFKBIZ. Interacts with YWHAB. Polyubiquitinated. Polyubiquitination is dependent of UBR5 that extends pre-ubiquitinated AKIRIN2.

It localises to the nucleus. It is found in the cytoplasm. Its subcellular location is the membrane. Molecular adapter that acts as a bridge between a variety of multiprotein complexes, and which is involved in embryonic development, immunity, myogenesis and brain development. Plays a key role in nuclear protein degradation by promoting import of proteasomes into the nucleus: directly binds to fully assembled 20S proteasomes at one end and to nuclear import receptor IPO9 at the other end, bridging them together and mediating the import of pre-assembled proteasome complexes through the nuclear pore. Involved in innate immunity by regulating the production of interleukin-6 (IL6) downstream of Toll-like receptor (TLR): acts by bridging the NF-kappa-B inhibitor NFKBIZ and the SWI/SNF complex, leading to promote induction of IL6. Also involved in adaptive immunity by promoting B-cell activation. Involved in brain development: required for the survival and proliferation of cerebral cortical progenitor cells. Involved in myogenesis: required for skeletal muscle formation and skeletal development, possibly by regulating expression of muscle differentiation factors. The protein is Akirin-2 of Bos taurus (Bovine).